Consider the following 212-residue polypeptide: Vesicle transport protein SFT2C (212 aa).

Residues 1–78 lie on the Cytoplasmic side of the membrane; it reads MADLHRQLQD…TRGQRLVAGG (78 aa). The chain crosses the membrane as a helical span at residues 79 to 99; sequence LCLLLAALCFGLAALYAPVLL. Residues 100 to 104 are Lumenal-facing; that stretch reads LRARK. A helical transmembrane segment spans residues 105 to 125; sequence FALLWSLGSVLAWASAALLRG. Topologically, residues 126–142 are cytoplasmic; that stretch reads GPACGRLLRGEETPSRS. Residues 143-165 traverse the membrane as a helical segment; it reads TLGYAAALGATLYAALVLRSTVL. Topologically, residues 166-174 are lumenal; that stretch reads TALGACAQV. The chain crosses the membrane as a helical span at residues 175-197; it reads AALLYALIGLLPWGGVTALRLAL. The Cytoplasmic portion of the chain corresponds to 198-212; the sequence is GRLNRGTGLANALPV.

The protein belongs to the SFT2 family.

It is found in the membrane. Its function is as follows. May be involved in fusion of retrograde transport vesicles derived from an endocytic compartment with the Golgi complex. The protein is Vesicle transport protein SFT2C of Mus musculus (Mouse).